A 239-amino-acid chain; its full sequence is Short palate, lung and nasal epithelium carcinoma-associated protein 2A (239 aa).

The signal sequence occupies residues 1–20; sequence MVQLWKLVLLCGLLAGTSES. Residues cysteine 166 and cysteine 209 are joined by a disulfide bond.

This sequence belongs to the BPI/LBP/Plunc superfamily. Plunc family. Detected in salivary tissues: parotid, submandibular and sublingual glands.

It localises to the secreted. The protein is Short palate, lung and nasal epithelium carcinoma-associated protein 2A (SPLUNC2A) of Bos taurus (Bovine).